The chain runs to 80 residues: UPF0180 protein BPUM_1317 (80 aa).

This sequence belongs to the UPF0180 family.

In Bacillus pumilus (strain SAFR-032), this protein is UPF0180 protein BPUM_1317.